A 228-amino-acid polypeptide reads, in one-letter code: Thymidylate kinase (228 aa).

The segment covering 1–10 (MSDSAVQRSS) has biased composition (polar residues). Residues 1–23 (MSDSAVQRSSGRGRFITFEGGEG) are disordered. Residue 20 to 27 (GGEGTGKS) participates in ATP binding.

The protein belongs to the thymidylate kinase family.

The enzyme catalyses dTMP + ATP = dTDP + ADP. Functionally, phosphorylation of dTMP to form dTDP in both de novo and salvage pathways of dTTP synthesis. The polypeptide is Thymidylate kinase (Bradyrhizobium diazoefficiens (strain JCM 10833 / BCRC 13528 / IAM 13628 / NBRC 14792 / USDA 110)).